The chain runs to 689 residues: Elongation factor G (689 aa).

Positions 8–282 constitute a tr-type G domain; that stretch reads ENTRNLGIMA…AVVDYLPSPL (275 aa). Residues 17 to 24, 81 to 85, and 135 to 138 each bind GTP; these read AHIDAGKT, DTPGH, and NKMD.

The protein belongs to the TRAFAC class translation factor GTPase superfamily. Classic translation factor GTPase family. EF-G/EF-2 subfamily.

Its subcellular location is the cytoplasm. Catalyzes the GTP-dependent ribosomal translocation step during translation elongation. During this step, the ribosome changes from the pre-translocational (PRE) to the post-translocational (POST) state as the newly formed A-site-bound peptidyl-tRNA and P-site-bound deacylated tRNA move to the P and E sites, respectively. Catalyzes the coordinated movement of the two tRNA molecules, the mRNA and conformational changes in the ribosome. In Mesoplasma florum (strain ATCC 33453 / NBRC 100688 / NCTC 11704 / L1) (Acholeplasma florum), this protein is Elongation factor G.